A 282-amino-acid polypeptide reads, in one-letter code: F-actin-capping protein subunit alpha (282 aa).

The protein belongs to the F-actin-capping protein alpha subunit family. As to quaternary structure, component of the F-actin capping complex, composed of a heterodimer of an alpha and a beta subunit.

The protein resides in the cytoplasm. It localises to the cytoskeleton. In terms of biological role, F-actin-capping proteins bind in a Ca(2+)-independent manner to the fast growing ends of actin filaments (barbed end) thereby blocking the exchange of subunits at these ends. Unlike other capping proteins (such as gelsolin and severin), these proteins do not sever actin filaments. The polypeptide is F-actin-capping protein subunit alpha (cap-1) (Caenorhabditis elegans).